Consider the following 251-residue polypeptide: Hydroxyacylglutathione hydrolase (251 aa).

Zn(2+) is bound by residues His-53, His-55, Asp-57, His-58, His-110, Asp-127, and His-165.

The protein belongs to the metallo-beta-lactamase superfamily. Glyoxalase II family. In terms of assembly, monomer. It depends on Zn(2+) as a cofactor.

The catalysed reaction is an S-(2-hydroxyacyl)glutathione + H2O = a 2-hydroxy carboxylate + glutathione + H(+). Its pathway is secondary metabolite metabolism; methylglyoxal degradation; (R)-lactate from methylglyoxal: step 2/2. In terms of biological role, thiolesterase that catalyzes the hydrolysis of S-D-lactoyl-glutathione to form glutathione and D-lactic acid. In Escherichia coli O45:K1 (strain S88 / ExPEC), this protein is Hydroxyacylglutathione hydrolase.